Reading from the N-terminus, the 206-residue chain is Max dimerization protein 3 (206 aa).

Residues 8–25 are interaction with SIN3A and SIN3B; the sequence is IQVLLQAAEFLERREREA. Residues 57 to 109 enclose the bHLH domain; sequence SGRHVHNELEKRRRAQLKRCLEQLRQQMPLGVDHTRYTTLSLLRGARMHIQKL.

As to quaternary structure, efficient DNA binding requires dimerization with another bHLH protein. Binds DNA as a heterodimer with MAX. Interacts with SIN3A AND SIN3B. Interacts with RNF17.

It localises to the nucleus. Transcriptional repressor. Binds with MAX to form a sequence-specific DNA-binding protein complex which recognizes the core sequence 5'-CAC[GA]TG-3'. Antagonizes MYC transcriptional activity by competing for MAX and suppresses MYC dependent cell transformation. The sequence is that of Max dimerization protein 3 (Mxd3) from Rattus norvegicus (Rat).